The following is a 926-amino-acid chain: ABC transporter A family member 6 (926 aa).

The next 6 helical transmembrane spans lie at 34–54 (LIVI…VFDS), 336–356 (ASLI…PVIL), 389–409 (FLAI…AIGL), 418–438 (TIQF…AFLV), 451–471 (VAYI…QFLI), and 525–545 (DEVF…TYYI). Residues 610 to 847 (IVCDNLKKVY…YGGSYVLTIT (238 aa)) form the ABC transporter domain. Residue 648–655 (GPNGAGKT) participates in ATP binding.

Belongs to the ABC transporter superfamily. ABCA family. CPR flippase (TC 3.A.1.211) subfamily.

The protein localises to the membrane. The protein is ABC transporter A family member 6 (ABCA6) of Arabidopsis thaliana (Mouse-ear cress).